The following is a 350-amino-acid chain: Galactokinase (350 aa).

Residue 14–17 (EHTD) coordinates substrate. ATP is bound by residues S46 and 96–102 (GAGLSSS). Mg(2+)-binding residues include S102 and E134. D146 serves as the catalytic Proton acceptor. Residue Y196 participates in substrate binding.

It belongs to the GHMP kinase family. GalK subfamily.

It localises to the cytoplasm. It catalyses the reaction alpha-D-galactose + ATP = alpha-D-galactose 1-phosphate + ADP + H(+). It participates in carbohydrate metabolism; galactose metabolism. In terms of biological role, catalyzes the transfer of the gamma-phosphate of ATP to D-galactose to form alpha-D-galactose-1-phosphate (Gal-1-P). This Thermotoga neapolitana (strain ATCC 49049 / DSM 4359 / NBRC 107923 / NS-E) protein is Galactokinase.